Consider the following 410-residue polypeptide: Bifunctional malic/malolactic enzyme (410 aa).

Tyr-36 serves as the catalytic Proton donor. Lys-91 functions as the Proton acceptor in the catalytic mechanism. A divalent metal cation contacts are provided by Glu-133, Asp-134, and Asp-159. Residues 192-195, Asn-286, and Asn-317 contribute to the NADP(+) site; that span reads AGAA.

It belongs to the malic enzymes family. As to quaternary structure, interacts with BrxC. Requires Mg(2+) as cofactor. Mn(2+) is required as a cofactor.

It carries out the reaction (S)-malate + NADP(+) = pyruvate + CO2 + NADPH. The enzyme catalyses oxaloacetate + H(+) = pyruvate + CO2. It catalyses the reaction (S)-malate + H(+) = (S)-lactate + CO2. With respect to regulation, NADPH is a strong modulator that switches activity from a pyruvate-producing malic enzyme to a lactate-generating malolactic enzyme. In terms of biological role, bifunctional enzyme with both malic and malolactic enzyme activities. In the absence of NADPH, catalyzes the reversible decarboxylation of malate to pyruvate. Can use NAD and NADP, but with a very strong preference for NADP. In the presence of excess NADPH, catalyzes the non-oxidative decarboxylation of malate to lactate. During growth on glucose, contributes to NADPH balancing via oxidation of the NADPH produced in excess by other enzymatic reactions. Can also catalyze the decarboxylation of oxaloacetate. The chain is Bifunctional malic/malolactic enzyme (ytsJ) from Bacillus subtilis (strain 168).